The chain runs to 152 residues: MKRDKRLEIIKEIVTNNKILTQEELQSLLLERGVEVTQATLSRDIRKLNIIKKRDKGESFYSFLTSGNSKINSDLQLYFYNFVISAKSVGALVVIRTKLGEADVLANALDDERDSRTDILGTIAGADTLLVICASEKAANILTAEIKYILLG.

This sequence belongs to the ArgR family.

It localises to the cytoplasm. It participates in amino-acid biosynthesis; L-arginine biosynthesis [regulation]. Functionally, regulates arginine biosynthesis genes. The chain is Arginine repressor from Lactococcus lactis subsp. cremoris (strain MG1363).